The primary structure comprises 510 residues: Histidine ammonia-lyase (510 aa).

The segment at residues 143–145 is a cross-link (5-imidazolinone (Ala-Gly)); sequence ASG. Position 144 is a 2,3-didehydroalanine (Ser) (Ser-144).

This sequence belongs to the PAL/histidase family. Contains an active site 4-methylidene-imidazol-5-one (MIO), which is formed autocatalytically by cyclization and dehydration of residues Ala-Ser-Gly.

Its subcellular location is the cytoplasm. The catalysed reaction is L-histidine = trans-urocanate + NH4(+). Its pathway is amino-acid degradation; L-histidine degradation into L-glutamate; N-formimidoyl-L-glutamate from L-histidine: step 1/3. This Shewanella piezotolerans (strain WP3 / JCM 13877) protein is Histidine ammonia-lyase.